A 158-amino-acid chain; its full sequence is S-ribosylhomocysteine lyase (158 aa).

3 residues coordinate Fe cation: His54, His58, and Cys124.

This sequence belongs to the LuxS family. Homodimer. Fe cation serves as cofactor.

It catalyses the reaction S-(5-deoxy-D-ribos-5-yl)-L-homocysteine = (S)-4,5-dihydroxypentane-2,3-dione + L-homocysteine. In terms of biological role, involved in the synthesis of autoinducer 2 (AI-2) which is secreted by bacteria and is used to communicate both the cell density and the metabolic potential of the environment. The regulation of gene expression in response to changes in cell density is called quorum sensing. Catalyzes the transformation of S-ribosylhomocysteine (RHC) to homocysteine (HC) and 4,5-dihydroxy-2,3-pentadione (DPD). The polypeptide is S-ribosylhomocysteine lyase (Limosilactobacillus reuteri (strain DSM 20016) (Lactobacillus reuteri)).